We begin with the raw amino-acid sequence, 242 residues long: Terpene cyclase cle7 (242 aa).

The next 7 helical transmembrane spans lie at 20 to 40 (LLLT…ITTI), 50 to 69 (GVSL…FAIL), 79 to 101 (VILR…FARS), 117 to 137 (LFVL…SVLL), 143 to 163 (FYWS…GILV), 172 to 192 (SYGM…SLFL), and 207 to 227 (ILMR…GVCF).

This sequence belongs to the paxB family.

The protein localises to the membrane. It participates in secondary metabolite biosynthesis; terpenoid biosynthesis. Non-reducing polyketide synthase; part of the cluster A that mediates the biosynthesis of chevalone E and its oxidized derivatives that possess a unique five-membered lactone ring and can synergistically enhance the cytotoxicity of doxorubicin (DOX) in breast cancer cells. Within the pathway, cle7 takes part to the biosynthesis of the molecular scaffold by catalyzing the cyclization of the prenyl group initiated by protonation and ring-opening of the epoxide to produce the chevalone E intermediate. The molecular scaffold is commonly biosynthesized by a series of enzymes including the non-reducing polyketide synthase (NR-PKS) cle1 that produces the alpha-pyrone triacetic acid lactone (TAL); The membrane-bound prenyltransferase cle5 that accepts TAL as its substrate to perform a C-3 geranylgeranylation reaction, in which the pathway-dedicated GGPS cle6 is required to provide GGPP, the other substrate of cle5; the FAD-dependent monooxygenase Cle3 that forms an (S)-epoxide ring at the terminal olefin of the geranylgeranyl group; and the terpene cyclase Cle7 that catalyzes the cyclization of the prenyl group that yields the pentacyclic pathway intermediate chevalone E. Chevalone E can derivatize into seven new oxidized analogs by the cytochrome P450 monooxygenases cle2 (acting at C-20) and cle4 (acting at C-11 and C-12). The protein is Terpene cyclase cle7 of Aspergillus versicolor.